The following is a 236-amino-acid chain: MARPLVPSSQKALLLELKGLQEEPVEGFRVTLVDEGDLYNWEVAIFGPPNTYYEGGYFKARLKFPIDYPYSPPAFRFLTKMWHPNIYETGDVCISILHPPVDDPQSGELPSERWNPTQNVRTILLSVISLLNEPNTFSPANVDASVMYRKWKESKGKDREYTDIIRKQVLGTKVDAERDGVKVPTTLAEYCVKTKAPAPDEGSDLFYDDYYEDGEVEEEADSCFGDDEDDSGTEES.

Positions 8 to 174 (SSQKALLLEL…IRKQVLGTKV (167 aa)) constitute a UBC core domain. The active-site Glycyl thioester intermediate is the Cys93. The important for ubiquitin transfer stretch occupies residues 98–113 (HPPVDDPQSGELPSER). Positions 190 to 236 (YCVKTKAPAPDEGSDLFYDDYYEDGEVEEEADSCFGDDEDDSGTEES) are SCF-binding. Phosphoserine; by CK2 is present on residues Ser203, Ser222, and Ser231. Residues 216 to 236 (VEEEADSCFGDDEDDSGTEES) form a disordered region. Residue Thr233 is modified to Phosphothreonine; by CK2. Ser236 carries the post-translational modification Phosphoserine; by CK2.

The protein belongs to the ubiquitin-conjugating enzyme family. Interacts with multiple Cul1-RING E3 ubiquitin-protein ligase complexes, also known as SCF (SKP1-CUL1-F-box protein) complexes. Identified in a SCF E3 ubiquitin ligase complex together with HINT1 and RBX1. When cullin is neddylated, the interaction between the E2 and the SCF complex is strengthened. Interacts with multiple Cul2-RING (CRL2) E3 ubiquitin-protein ligase complexes, also known as ECS (Elongin BC-CUL2/5-SOCS-box protein) complexes. When phosphorylated, interacts with beta-TrCP (BTRC). Interacts with human herpes virus 1 protein ICP0 and associates with the proteasome for degradation. Interacts with casein kinase subunit CSNK2B. Interacts with CNTD1; this interaction regulates the cell-cycle progression. Autoubiquitinated. Autoubiquitination is promoted by the human herpes virus 1 protein ICP0 and leads to degradation by the Ubiquitin-proteasomal pathway. In terms of processing, phosphorylated by CK2. Phosphorylation of the C-terminal tail by CK2 controls the nuclear localization. Expressed in testes during spermatogenesis to regulate repression of cAMP-induced transcription.

The protein resides in the cytoplasm. It is found in the nucleus. It carries out the reaction S-ubiquitinyl-[E1 ubiquitin-activating enzyme]-L-cysteine + [E2 ubiquitin-conjugating enzyme]-L-cysteine = [E1 ubiquitin-activating enzyme]-L-cysteine + S-ubiquitinyl-[E2 ubiquitin-conjugating enzyme]-L-cysteine.. The catalysed reaction is S-ubiquitinyl-[E1 ubiquitin-activating enzyme]-L-cysteine + [acceptor protein]-L-lysine = [E1 ubiquitin-activating enzyme]-L-cysteine + N(6)-monoubiquitinyl-[acceptor protein]-L-lysine.. It participates in protein modification; protein ubiquitination. Its activity is regulated as follows. CDC34-catalyzed polyubiquitin chain assembly activity is stimulated by the conjugation of NEDD8 to the CUL1 SCF E3 ligase complex subunit. In terms of biological role, E2 ubiquitin-conjugating enzyme that accepts ubiquitin from an E1 ubiquitin-activating protein, and catalyzes its covalent attachment to other proteins by an E3 ubiquitin-protein ligase complex. In vitro catalyzes 'Lys-48'-linked polyubiquitination. Cooperates with the E2 UBCH5C and the SCF(FBXW11) E3 ligase complex for the polyubiquitination of NFKBIA leading to its subsequent proteasomal degradation. Performs ubiquitin chain elongation building ubiquitin chains from the UBE2D3-primed NFKBIA-linked ubiquitin. UBE2D3 acts as an initiator E2, priming the phosphorylated NFKBIA target at positions 'Lys-21' and/or 'Lys-22' with a monoubiquitin. Cooperates with the SCF(SKP2) E3 ligase complex to regulate cell proliferation through ubiquitination and degradation of MYBL2 and KIP1. Involved in ubiquitin conjugation and degradation of CREM isoform ICERIIgamma and ATF15 resulting in abrogation of ICERIIgamma- and ATF5-mediated repression of cAMP-induced transcription during both meiotic and mitotic cell cycles. Involved in the regulation of the cell cycle G2/M phase through its targeting of the WEE1 kinase for ubiquitination and degradation. Also involved in the degradation of beta-catenin. Is target of human herpes virus 1 protein ICP0, leading to ICP0-dependent dynamic interaction with proteasomes. The chain is Ubiquitin-conjugating enzyme E2 R1 (CDC34) from Homo sapiens (Human).